We begin with the raw amino-acid sequence, 362 residues long: MELGSCLEGGREAAEEEGEPEVKKRRLLCVEFASVASCDAAVAQCFLAENDWEMERALNSYFEPPVEESALERRPETISEPKTYVDLTNEETTDSTTSKISPSEDTQQENGSMFSLITWNIDGLDLNNLSERARGVCSYLALYSPDVIFLQEVIPPYYSYLKKRSSNYEIITGHEEGYFTAIMLKKSRVKLKSQEIIPFPSTKMMRNLLCVHVNVSGNELCLMTSHLESTRGHAAERMNQLKMVLKKMQEAPESATVIFAGDTNLRDREVTRCGGLPNNIVDVWEFLGKPKHCQYTWDTQMNSNLGITAACKLRFDRIFFRAAAEEGHIIPRSLDLLGLEKLDCGRFPSDHWGLLCNLDIIL.

Methionine 1 bears the N-acetylmethionine mark. Residues 1–20 (MELGSCLEGGREAAEEEGEP) are disordered. Residues lysine 23 and lysine 82 each participate in a glycyl lysine isopeptide (Lys-Gly) (interchain with G-Cter in SUMO2) cross-link. Positions 87-109 (LTNEETTDSTTSKISPSEDTQQE) are disordered. Threonine 88 and threonine 92 each carry phosphothreonine; by ACVR1B. Positions 94–109 (DSTTSKISPSEDTQQE) are enriched in polar residues. Serine 95 carries the phosphoserine modification. Residues 120–124 (NIDGL) are interaction with 5' end of substrate DNA. Positions 122 and 152 each coordinate Mg(2+). Residues 226–231 (HLESTR) form an interaction with 5' end of substrate DNA region. The active-site Proton donor/acceptor is the aspartate 262. The segment at 264–266 (NLR) is interaction with 5' end of substrate DNA.

It belongs to the CCR4/nocturin family. In terms of assembly, interacts with TRAF2, TRAF3, TRAF5, TRAF6, TNFRSF8/CD30, TNFRSF5/CD40, TNFRSF1B/TNF-R75, ETS1, ETS2, FLI1, SMAD3 and ACVR1B/ALK4. As to quaternary structure, (Microbial infection) Interacts with Hantaan hantavirus nucleoprotein. (Microbial infection) Interacts with Seoul hantavirus nucleoprotein. Mg(2+) is required as a cofactor. It depends on Mn(2+) as a cofactor. In terms of processing, ubiquitinated by TRAF6. In terms of tissue distribution, widely expressed. Highly expressed in various brain regions, including the frontal and occipital lobes, the hippocampus, the striatum and the cerebellum.

The protein localises to the nucleus. It localises to the PML body. It is found in the nucleolus. Its subcellular location is the cytoplasm. DNA repair enzyme that can remove a variety of covalent adducts from DNA through hydrolysis of a 5'-phosphodiester bond, giving rise to DNA with a free 5' phosphate. Catalyzes the hydrolysis of dead-end complexes between DNA and the topoisomerase 2 (TOP2) active site tyrosine residue. The 5'-tyrosyl DNA phosphodiesterase activity can enable the repair of TOP2-induced DNA double-strand breaks/DSBs without the need for nuclease activity, creating a 'clean' DSB with 5'-phosphate termini that are ready for ligation. Thereby, protects the transcription of many genes involved in neurological development and maintenance from the abortive activity of TOP2. Hydrolyzes 5'-phosphoglycolates on protruding 5' ends on DSBs due to DNA damage by radiation and free radicals. Has preference for single-stranded DNA or duplex DNA with a 4 base pair overhang as substrate. Acts as a regulator of ribosome biogenesis following stress. Also has 3'-tyrosyl DNA phosphodiesterase activity, but less efficiently and much slower than TDP1. Constitutes the major if not only 5'-tyrosyl-DNA phosphodiesterase in cells. Also acts as an adapter by participating in the specific activation of MAP3K7/TAK1 in response to TGF-beta: associates with components of the TGF-beta receptor-TRAF6-TAK1 signaling module and promotes their ubiquitination dependent complex formation. Involved in non-canonical TGF-beta induced signaling routes. May also act as a negative regulator of ETS1 and may inhibit NF-kappa-B activation. Functionally, (Microbial infection) Used by picornaviruses to remove the small polypeptide, VPg (virus Protein genome-linked, the primer for viral RNA synthesis), from the genomic RNA of the virus. Acts as a 5'-tyrosyl RNA phosphodiesterase and cleaves the covalent VPg-Tyr-RNA bond. This cleavage would play a role in viral replication and occur in viral replication vesicles, but would not act on viral mRNA. This Homo sapiens (Human) protein is Tyrosyl-DNA phosphodiesterase 2.